A 361-amino-acid polypeptide reads, in one-letter code: tRNA-specific 2-thiouridylase MnmA (361 aa).

Residues 8-15 (AMSGGVDS) and M35 each bind ATP. The interval 95-97 (NPD) is interaction with target base in tRNA. Catalysis depends on C100, which acts as the Nucleophile. C100 and C196 are oxidised to a cystine. ATP is bound at residue G124. The tract at residues 146–148 (KDQ) is interaction with tRNA. The Cysteine persulfide intermediate role is filled by C196. Residues 303–304 (RY) are interaction with tRNA.

The protein belongs to the MnmA/TRMU family.

The protein localises to the cytoplasm. The catalysed reaction is S-sulfanyl-L-cysteinyl-[protein] + uridine(34) in tRNA + AH2 + ATP = 2-thiouridine(34) in tRNA + L-cysteinyl-[protein] + A + AMP + diphosphate + H(+). Its function is as follows. Catalyzes the 2-thiolation of uridine at the wobble position (U34) of tRNA, leading to the formation of s(2)U34. This chain is tRNA-specific 2-thiouridylase MnmA, found in Chlamydia felis (strain Fe/C-56) (Chlamydophila felis).